Here is a 162-residue protein sequence, read N- to C-terminus: Endoribonuclease YbeY (162 aa).

Zn(2+) contacts are provided by His-117, His-121, and His-127.

Belongs to the endoribonuclease YbeY family. It depends on Zn(2+) as a cofactor.

It is found in the cytoplasm. Its function is as follows. Single strand-specific metallo-endoribonuclease involved in late-stage 70S ribosome quality control and in maturation of the 3' terminus of the 16S rRNA. This chain is Endoribonuclease YbeY, found in Francisella tularensis subsp. tularensis (strain WY96-3418).